The sequence spans 289 residues: Pantothenate synthetase (289 aa).

30-37 (MGNLHEGH) serves as a coordination point for ATP. Catalysis depends on histidine 37, which acts as the Proton donor. Glutamine 61 serves as a coordination point for (R)-pantoate. Glutamine 61 contacts beta-alanine. Residue 149–152 (GEKD) participates in ATP binding. Glutamine 155 contributes to the (R)-pantoate binding site. 186 to 189 (MSSR) contacts ATP.

This sequence belongs to the pantothenate synthetase family. In terms of assembly, homodimer.

The protein resides in the cytoplasm. It carries out the reaction (R)-pantoate + beta-alanine + ATP = (R)-pantothenate + AMP + diphosphate + H(+). It functions in the pathway cofactor biosynthesis; (R)-pantothenate biosynthesis; (R)-pantothenate from (R)-pantoate and beta-alanine: step 1/1. Functionally, catalyzes the condensation of pantoate with beta-alanine in an ATP-dependent reaction via a pantoyl-adenylate intermediate. The chain is Pantothenate synthetase from Psychromonas ingrahamii (strain DSM 17664 / CCUG 51855 / 37).